A 340-amino-acid chain; its full sequence is N-acetyl-gamma-glutamyl-phosphate reductase (340 aa).

Residue Cys-146 is part of the active site.

This sequence belongs to the NAGSA dehydrogenase family. Type 1 subfamily.

Its subcellular location is the cytoplasm. The catalysed reaction is N-acetyl-L-glutamate 5-semialdehyde + phosphate + NADP(+) = N-acetyl-L-glutamyl 5-phosphate + NADPH + H(+). It participates in amino-acid biosynthesis; L-arginine biosynthesis; N(2)-acetyl-L-ornithine from L-glutamate: step 3/4. Its function is as follows. Catalyzes the NADPH-dependent reduction of N-acetyl-5-glutamyl phosphate to yield N-acetyl-L-glutamate 5-semialdehyde. This is N-acetyl-gamma-glutamyl-phosphate reductase from Streptococcus mutans serotype c (strain ATCC 700610 / UA159).